The following is a 37-amino-acid chain: MIEPILLGIVLGMVLVTLAGLFVAAYRQYQRGNKMGL.

A helical membrane pass occupies residues 5-25; it reads ILLGIVLGMVLVTLAGLFVAA.

It belongs to the PetG family. In terms of assembly, the 4 large subunits of the cytochrome b6-f complex are cytochrome b6, subunit IV (17 kDa polypeptide, PetD), cytochrome f and the Rieske protein, while the 4 small subunits are PetG, PetL, PetM and PetN. The complex functions as a dimer.

The protein resides in the cellular thylakoid membrane. Its function is as follows. Component of the cytochrome b6-f complex, which mediates electron transfer between photosystem II (PSII) and photosystem I (PSI), cyclic electron flow around PSI, and state transitions. PetG is required for either the stability or assembly of the cytochrome b6-f complex. This Synechococcus sp. (strain JA-3-3Ab) (Cyanobacteria bacterium Yellowstone A-Prime) protein is Cytochrome b6-f complex subunit 5.